The primary structure comprises 386 residues: Acyl-[acyl-carrier-protein] dehydrogenase MbtN (386 aa).

The protein belongs to the acyl-CoA dehydrogenase family. Requires FAD as cofactor.

Its pathway is siderophore biosynthesis; mycobactin biosynthesis. Functionally, catalyzes the dehydrogenation at the alpha-beta position of ACP-bound acyl chains. This results in the introduction of a double bond in the lipidic chain, which is further transferred to the epsilon-amino group of lysine residue in the mycobactin core by MbtK. This Mycobacterium bovis (strain ATCC BAA-935 / AF2122/97) protein is Acyl-[acyl-carrier-protein] dehydrogenase MbtN (mbtN).